We begin with the raw amino-acid sequence, 746 residues long: Probable ubiquitin carboxyl-terminal hydrolase MINDY-4 (746 aa).

Disordered regions lie at residues aspartate 123 to glutamate 179, methionine 198 to glutamate 254, and glycine 319 to methionine 342. Polar residues-rich tracts occupy residues tyrosine 141–serine 152 and threonine 165–valine 174. Catalysis depends on cysteine 448, which acts as the Nucleophile. Histidine 666 (proton acceptor) is an active-site residue.

Belongs to the MINDY deubiquitinase family. FAM188 subfamily.

The catalysed reaction is Thiol-dependent hydrolysis of ester, thioester, amide, peptide and isopeptide bonds formed by the C-terminal Gly of ubiquitin (a 76-residue protein attached to proteins as an intracellular targeting signal).. Probable hydrolase that can remove 'Lys-48'-linked conjugated ubiquitin from proteins. The polypeptide is Probable ubiquitin carboxyl-terminal hydrolase MINDY-4 (mindy4) (Xenopus tropicalis (Western clawed frog)).